Consider the following 86-residue polypeptide: ATP synthase subunit c (86 aa).

Transmembrane regions (helical) follow at residues 13–33 (FFAT…AGLA) and 63–83 (ILGQ…AFIL).

Belongs to the ATPase C chain family. In terms of assembly, F-type ATPases have 2 components, F(1) - the catalytic core - and F(0) - the membrane proton channel. F(1) has five subunits: alpha(3), beta(3), gamma(1), delta(1), epsilon(1). F(0) has three main subunits: a(1), b(2) and c(10-14). The alpha and beta chains form an alternating ring which encloses part of the gamma chain. F(1) is attached to F(0) by a central stalk formed by the gamma and epsilon chains, while a peripheral stalk is formed by the delta and b chains.

It localises to the cell membrane. F(1)F(0) ATP synthase produces ATP from ADP in the presence of a proton or sodium gradient. F-type ATPases consist of two structural domains, F(1) containing the extramembraneous catalytic core and F(0) containing the membrane proton channel, linked together by a central stalk and a peripheral stalk. During catalysis, ATP synthesis in the catalytic domain of F(1) is coupled via a rotary mechanism of the central stalk subunits to proton translocation. Functionally, key component of the F(0) channel; it plays a direct role in translocation across the membrane. A homomeric c-ring of between 10-14 subunits forms the central stalk rotor element with the F(1) delta and epsilon subunits. The polypeptide is ATP synthase subunit c (Acholeplasma laidlawii (strain PG-8A)).